The following is a 189-amino-acid chain: Protein GrpE (189 aa).

The interval 1–22 (MKEQQKETEQNIEEINDETVTE) is disordered. A compositionally biased stretch (acidic residues) spans 10-22 (QNIEEINDETVTE).

It belongs to the GrpE family. As to quaternary structure, homodimer.

It is found in the cytoplasm. Participates actively in the response to hyperosmotic and heat shock by preventing the aggregation of stress-denatured proteins, in association with DnaK and GrpE. It is the nucleotide exchange factor for DnaK and may function as a thermosensor. Unfolded proteins bind initially to DnaJ; upon interaction with the DnaJ-bound protein, DnaK hydrolyzes its bound ATP, resulting in the formation of a stable complex. GrpE releases ADP from DnaK; ATP binding to DnaK triggers the release of the substrate protein, thus completing the reaction cycle. Several rounds of ATP-dependent interactions between DnaJ, DnaK and GrpE are required for fully efficient folding. The chain is Protein GrpE from Leuconostoc citreum (strain KM20).